We begin with the raw amino-acid sequence, 216 residues long: Peptide deformylase 1 (216 aa).

Fe cation contacts are provided by C135 and H177. The active site involves E178. Residue H181 participates in Fe cation binding.

It belongs to the polypeptide deformylase family. It depends on Fe(2+) as a cofactor.

It carries out the reaction N-terminal N-formyl-L-methionyl-[peptide] + H2O = N-terminal L-methionyl-[peptide] + formate. Its function is as follows. Removes the formyl group from the N-terminal Met of newly synthesized proteins. Requires at least a dipeptide for an efficient rate of reaction. N-terminal L-methionine is a prerequisite for activity but the enzyme has broad specificity at other positions. The protein is Peptide deformylase 1 of Streptomyces avermitilis (strain ATCC 31267 / DSM 46492 / JCM 5070 / NBRC 14893 / NCIMB 12804 / NRRL 8165 / MA-4680).